Reading from the N-terminus, the 271-residue chain is Tryptophan synthase alpha chain (271 aa).

Active-site proton acceptor residues include glutamate 49 and aspartate 60.

The protein belongs to the TrpA family. In terms of assembly, tetramer of two alpha and two beta chains.

The enzyme catalyses (1S,2R)-1-C-(indol-3-yl)glycerol 3-phosphate + L-serine = D-glyceraldehyde 3-phosphate + L-tryptophan + H2O. It participates in amino-acid biosynthesis; L-tryptophan biosynthesis; L-tryptophan from chorismate: step 5/5. The alpha subunit is responsible for the aldol cleavage of indoleglycerol phosphate to indole and glyceraldehyde 3-phosphate. This chain is Tryptophan synthase alpha chain, found in Paraburkholderia phymatum (strain DSM 17167 / CIP 108236 / LMG 21445 / STM815) (Burkholderia phymatum).